The sequence spans 89 residues: MAVADIKTAEIVKDNARSANDTGSPEVQVSLLTARINELTPHFKANAKDHHSRRGLLKMVSRRRRLLDYLKGKDLDRYRALIEKLGLRK.

Belongs to the universal ribosomal protein uS15 family. Part of the 30S ribosomal subunit. Forms a bridge to the 50S subunit in the 70S ribosome, contacting the 23S rRNA.

Functionally, one of the primary rRNA binding proteins, it binds directly to 16S rRNA where it helps nucleate assembly of the platform of the 30S subunit by binding and bridging several RNA helices of the 16S rRNA. Forms an intersubunit bridge (bridge B4) with the 23S rRNA of the 50S subunit in the ribosome. The protein is Small ribosomal subunit protein uS15 of Polynucleobacter asymbioticus (strain DSM 18221 / CIP 109841 / QLW-P1DMWA-1) (Polynucleobacter necessarius subsp. asymbioticus).